We begin with the raw amino-acid sequence, 335 residues long: Probable cytosolic iron-sulfur protein assembly protein Ciao1 (335 aa).

WD repeat units follow at residues 12-51, 57-96, 101-140, 146-185, 192-231, 250-289, and 301-335; these read GHKG…WSTK, GHKR…FECN, GHEN…EFEC, PHTQ…NDWD, SHTS…NTAG, QHSR…KPDE, and AHDQ…KVSE.

Belongs to the WD repeat CIA1 family.

Essential component of the cytosolic iron-sulfur (Fe/S) protein assembly machinery. Required for the maturation of extramitochondrial Fe/S proteins. The chain is Probable cytosolic iron-sulfur protein assembly protein Ciao1 from Drosophila simulans (Fruit fly).